A 389-amino-acid chain; its full sequence is GTPase Obg (389 aa).

The region spanning 1–159 (MKFVDEAVIK…RELRLELLLL (159 aa)) is the Obg domain. The OBG-type G domain maps to 160 to 333 (ADVGMLGLPN…LCYKLADFME (174 aa)). Residues 166–173 (GLPNAGKS), 191–195 (FTTLI), 213–216 (DIPG), 283–286 (NKVD), and 314–316 (SAV) contribute to the GTP site. Residues S173 and T193 each contribute to the Mg(2+) site. The disordered stretch occupies residues 359-389 (NQGEVITEDDDDDWDDWDDEEDDGHVIYVRE). A compositionally biased stretch (acidic residues) spans 364 to 381 (ITEDDDDDWDDWDDEEDD).

The protein belongs to the TRAFAC class OBG-HflX-like GTPase superfamily. OBG GTPase family. As to quaternary structure, monomer. Requires Mg(2+) as cofactor.

Its subcellular location is the cytoplasm. An essential GTPase which binds GTP, GDP and possibly (p)ppGpp with moderate affinity, with high nucleotide exchange rates and a fairly low GTP hydrolysis rate. Plays a role in control of the cell cycle, stress response, ribosome biogenesis and in those bacteria that undergo differentiation, in morphogenesis control. The polypeptide is GTPase Obg (Vibrio vulnificus (strain CMCP6)).